Consider the following 527-residue polypeptide: MRLRNFYSALALSAAVFAGPLYAAAPAMAAGTISGGFDVGPGGFQGNFNPLAATGGFTWLVTYFEPLVIYDDKLENIVGDLAKSFEISPDQLTYTFKLAHAKWHDGEPFTSKDAKFTFDLARNGKTGSVFAARLASIASVETPDEKTVVIKLKEPSPSMLDTLTKVMMLPEHALASIPPEQLAKNAWWSSTPIGTGPFKFNKYVADQYVELTANPDYRGGRPQVDKLINRYFADPAAAIAALRSGEIQFTYVDSNDVSTFSSDSAFRVIEGDSFVVNYVGFNQEVPLWKDLKVRQAFMHAINRDAIIQSLYGGAAKPANCVYVADRLVPKAIDAYAYDPQKARQLLDEAGWDKINGSKPITILTYYNSPLVANVLAAMQAMLAQVGINIVPRTVDTPTYNSIVYKQGGTADEFPLIFAGLQNGPDPSSINIGLNEKQIPPAGSNIMRIRMPAVTKALDAALAETNPAKRDARYQDVCKATNANLPWGTMWVANRYGVASSKLENFIWTPAPAGGPYQAHPEKWSILE.

An N-terminal signal peptide occupies residues 1–23; the sequence is MRLRNFYSALALSAAVFAGPLYA.

This sequence belongs to the bacterial solute-binding protein 5 family. In terms of assembly, the complex is composed of two ATP-binding proteins (BMEII0863 and BMEII0864), two transmembrane proteins (BMEII0860 and BMEII0861) and a solute-binding protein (BMEII0859).

It localises to the periplasm. In terms of biological role, probably part of an ABC transporter complex that could be involved in peptide import. The sequence is that of Putative ABC transporter peptide-binding protein BMEII0859 from Brucella melitensis biotype 1 (strain ATCC 23456 / CCUG 17765 / NCTC 10094 / 16M).